The primary structure comprises 276 residues: Urease accessory protein UreD (276 aa).

This sequence belongs to the UreD family. As to quaternary structure, ureD, UreF and UreG form a complex that acts as a GTP-hydrolysis-dependent molecular chaperone, activating the urease apoprotein by helping to assemble the nickel containing metallocenter of UreC. The UreE protein probably delivers the nickel.

It localises to the cytoplasm. Its function is as follows. Required for maturation of urease via the functional incorporation of the urease nickel metallocenter. The sequence is that of Urease accessory protein UreD from Paracidovorax citrulli (strain AAC00-1) (Acidovorax citrulli).